Reading from the N-terminus, the 477-residue chain is Minor capsid protein (477 aa).

The protein belongs to the closteroviridae minor capsid protein family.

The protein resides in the virion. Functionally, minor capsid protein that encapsidates the 5'-terminal portion of the viral genome. This chain is Minor capsid protein, found in Vitis vinifera (Grape).